The following is a 484-amino-acid chain: ATP synthase subunit beta (484 aa).

168–175 (GGAGVGKT) is a binding site for ATP.

This sequence belongs to the ATPase alpha/beta chains family. As to quaternary structure, F-type ATPases have 2 components, CF(1) - the catalytic core - and CF(0) - the membrane proton channel. CF(1) has five subunits: alpha(3), beta(3), gamma(1), delta(1), epsilon(1). CF(0) has three main subunits: a(1), b(2) and c(9-12). The alpha and beta chains form an alternating ring which encloses part of the gamma chain. CF(1) is attached to CF(0) by a central stalk formed by the gamma and epsilon chains, while a peripheral stalk is formed by the delta and b chains.

The protein localises to the cell membrane. It carries out the reaction ATP + H2O + 4 H(+)(in) = ADP + phosphate + 5 H(+)(out). Its function is as follows. Produces ATP from ADP in the presence of a proton gradient across the membrane. The catalytic sites are hosted primarily by the beta subunits. The polypeptide is ATP synthase subunit beta (Renibacterium salmoninarum (strain ATCC 33209 / DSM 20767 / JCM 11484 / NBRC 15589 / NCIMB 2235)).